The chain runs to 701 residues: Acetyl-coenzyme A synthetase, cytoplasmic (701 aa).

Basic and acidic residues predominate over residues 1-26 (MGLPEERRKSGSGSRAREETGAEGRV). Residues 1–37 (MGLPEERRKSGSGSRAREETGAEGRVRGWSPPPEVRR) are disordered. Residues 1 to 107 (MGLPEERRKS…GATTNICYNV (107 aa)) are interaction with TFEB. Phosphoserine is present on S30. 219-222 (RGEK) contributes to the CoA binding site. Phosphoserine occurs at positions 263, 265, and 267. T363 is a CoA binding site. Residue K418 is modified to N6-acetyllysine. ATP contacts are provided by residues 439–441 (GEP), 463–468 (DTFWQT), D552, and R567. Positions 575 and 636 each coordinate CoA. The short motif at 656–668 (KTRSGKIMRRVLR) is the Nuclear localization signal element. S659 bears the Phosphoserine; by AMPK mark. N6-acetyllysine is present on K661.

This sequence belongs to the ATP-dependent AMP-binding enzyme family. Monomer. Interacts with TFEB. AMPK-mediated phosphorylated form at Ser-659 interacts with KPNA1; this interaction results in nuclear translocation of ACSS2. Interacts with the 'Thr-172' phosphorylated form of PRKAA2. Interacts with CREBBP. In terms of processing, reversibly acetylated at Lys-661. The acetyl-CoA synthase activity is inhibited by acetylation and activated by deacetylation mediated by the deacetylases SIRT1 and SIRT3. As to expression, expressed in the hippocampus.

The protein localises to the cytoplasm. Its subcellular location is the cytosol. It localises to the nucleus. It carries out the reaction acetate + ATP + CoA = acetyl-CoA + AMP + diphosphate. The catalysed reaction is propanoate + ATP + CoA = propanoyl-CoA + AMP + diphosphate. With respect to regulation, inhibited by acetylation at Lys-661 and activated by deacetylation mediated by the deacetylases SIRT1 and SIRT3. Functionally, catalyzes the synthesis of acetyl-CoA from short-chain fatty acids. Acetate is the preferred substrate but can also utilize propionate with a much lower affinity. Nuclear ACSS2 promotes glucose deprivation-induced lysosomal biogenesis and autophagy, tumor cell survival and brain tumorigenesis. Glucose deprivation results in AMPK-mediated phosphorylation of ACSS2 leading to its translocation to the nucleus where it binds to TFEB and locally produces acetyl-CoA for histone acetylation in the promoter regions of TFEB target genes thereby activating their transcription. The regulation of genes associated with autophagy and lysosomal activity through ACSS2 is important for brain tumorigenesis and tumor survival. Acts as a chromatin-bound transcriptional coactivator that up-regulates histone acetylation and expression of neuronal genes. Can be recruited to the loci of memory-related neuronal genes to maintain a local acetyl-CoA pool, providing the substrate for histone acetylation and promoting the expression of specific genes, which is essential for maintaining long-term spatial memory. The sequence is that of Acetyl-coenzyme A synthetase, cytoplasmic (Acss2) from Mus musculus (Mouse).